We begin with the raw amino-acid sequence, 622 residues long: Apical membrane antigen 1 (622 aa).

The signal sequence occupies residues 1-24 (MRKLYCVLLLSAFEFTYMINFGRG). The Extracellular portion of the chain corresponds to 25–546 (QNYWEHPYQN…EHKPTYDNMK (522 aa)). Intrachain disulfides connect Cys-149/Cys-302, Cys-217/Cys-247, Cys-263/Cys-275, Cys-320/Cys-418, and Cys-337/Cys-409. Asn-162 carries an N-linked (GlcNAc...) asparagine glycan. N-linked (GlcNAc...) asparagine glycosylation is found at Asn-286, Asn-371, Asn-421, Asn-422, and Asn-499. Cystine bridges form between Cys-443-Cys-502, Cys-490-Cys-507, and Cys-492-Cys-509. A helical membrane pass occupies residues 547–567 (IIIASSAAVAVLATILMVYLY). Residues 568–622 (KRKGNAEKYDKMDQPQDYGKSTSRNDEMLDPEASFWGEEKRASHTTPVLMEKPYY) lie on the Cytoplasmic side of the membrane. The segment at 577–607 (DKMDQPQDYGKSTSRNDEMLDPEASFWGEEK) is disordered.

The protein belongs to the apicomplexan parasites AMA1 family.

It is found in the membrane. Its function is as follows. Involved in parasite invasion of erythrocytes. The sequence is that of Apical membrane antigen 1 (AMA-1) from Plasmodium falciparum (isolate Camp / Malaysia).